A 270-amino-acid chain; its full sequence is Phospholysine phosphohistidine inorganic pyrophosphate phosphatase (270 aa).

Residues D17 and S19 each coordinate Mg(2+). Residues 17 to 19 (DIS), 54 to 55 (TN), and K189 each bind substrate. D214 contacts Mg(2+).

The protein belongs to the HAD-like hydrolase superfamily. In terms of assembly, homodimer. Requires Mg(2+) as cofactor.

It localises to the cytoplasm. The protein resides in the nucleus. The catalysed reaction is diphosphate + H2O = 2 phosphate + H(+). In terms of biological role, phosphatase that hydrolyzes imidodiphosphate, 3-phosphohistidine and 6-phospholysine. Has broad substrate specificity and can also hydrolyze inorganic diphosphate, but with lower efficiency. The polypeptide is Phospholysine phosphohistidine inorganic pyrophosphate phosphatase (Lhpp) (Rattus norvegicus (Rat)).